Here is a 351-residue protein sequence, read N- to C-terminus: Transcription factor bHLH93 (351 aa).

The 50-residue stretch at 174–223 folds into the bHLH domain; sequence GQPSKNLMAERRRRKRLNDRLSMLRSIVPKISKMDRTSILGDAIDYMKEL.

As to quaternary structure, homodimer. Interacts with FAMA. As to expression, broadly expressed.

The protein localises to the nucleus. Transcription factor. May be involved in the differentiation of stomatal guard cells. This is Transcription factor bHLH93 (BHLH93) from Arabidopsis thaliana (Mouse-ear cress).